The sequence spans 248 residues: Triosephosphate isomerase (248 aa).

Asn11 and Lys13 together coordinate substrate. His95 (electrophile) is an active-site residue. Residue Glu165 is the Proton acceptor of the active site.

This sequence belongs to the triosephosphate isomerase family. Homodimer.

The protein localises to the cytoplasm. It carries out the reaction D-glyceraldehyde 3-phosphate = dihydroxyacetone phosphate. The enzyme catalyses dihydroxyacetone phosphate = methylglyoxal + phosphate. It participates in carbohydrate degradation; glycolysis; D-glyceraldehyde 3-phosphate from glycerone phosphate: step 1/1. The protein operates within carbohydrate biosynthesis; gluconeogenesis. Triosephosphate isomerase is an extremely efficient metabolic enzyme that catalyzes the interconversion between dihydroxyacetone phosphate (DHAP) and D-glyceraldehyde-3-phosphate (G3P) in glycolysis and gluconeogenesis. In terms of biological role, it is also responsible for the non-negligible production of methylglyoxal a reactive cytotoxic side-product that modifies and can alter proteins, DNA and lipids. The chain is Triosephosphate isomerase (tpi1) from Oryzias latipes (Japanese rice fish).